Reading from the N-terminus, the 103-residue chain is Small ribosomal subunit protein uS10 (103 aa).

Belongs to the universal ribosomal protein uS10 family. In terms of assembly, part of the 30S ribosomal subunit.

Involved in the binding of tRNA to the ribosomes. This Saccharophagus degradans (strain 2-40 / ATCC 43961 / DSM 17024) protein is Small ribosomal subunit protein uS10.